The chain runs to 217 residues: Thymidylate kinase (217 aa).

7 to 14 (GIEGAGKS) is an ATP binding site.

The protein belongs to the thymidylate kinase family.

It carries out the reaction dTMP + ATP = dTDP + ADP. Its function is as follows. Phosphorylation of dTMP to form dTDP in both de novo and salvage pathways of dTTP synthesis. This Desulfovibrio desulfuricans (strain ATCC 27774 / DSM 6949 / MB) protein is Thymidylate kinase.